Here is a 211-residue protein sequence, read N- to C-terminus: Protein-lysine N-methyltransferase DDB_G0272708 (211 aa).

Belongs to the class I-like SAM-binding methyltransferase superfamily. EFM5 family.

The protein resides in the cytoplasm. Its function is as follows. S-adenosyl-L-methionine-dependent protein-lysine N-methyltransferase that methylates elongation factor 1-alpha. The polypeptide is Protein-lysine N-methyltransferase DDB_G0272708 (Dictyostelium discoideum (Social amoeba)).